Here is a 280-residue protein sequence, read N- to C-terminus: Urease accessory protein UreD (280 aa).

This sequence belongs to the UreD family. As to quaternary structure, ureD, UreF and UreG form a complex that acts as a GTP-hydrolysis-dependent molecular chaperone, activating the urease apoprotein by helping to assemble the nickel containing metallocenter of UreC. The UreE protein probably delivers the nickel.

Its subcellular location is the cytoplasm. Its function is as follows. Required for maturation of urease via the functional incorporation of the urease nickel metallocenter. The chain is Urease accessory protein UreD from Mesorhizobium japonicum (strain LMG 29417 / CECT 9101 / MAFF 303099) (Mesorhizobium loti (strain MAFF 303099)).